Here is a 706-residue protein sequence, read N- to C-terminus: MSTAVAEFKPSEKLLKTRNIGISAHIDSGKTTLTERILFYTNRIHAIHEVRGKDGVGAKMDSMDLERERGITIQSAATYCQWKNHTINIIDTPGHVDFTVEVERSLRVLDSAILVLCGVAGVQSQSITVDRQMRRYNVPRVAFINKLDRTGANPFRVIEQLKEKLKHNAVPVQIPIGLENDLKGVVDLVTMKAYYFEGKDGMDIQEKEIPDDLKELANKKHEELLDAASMFSDELTEALLEGTPTEEMIKKAIRTGTIELKMTPVFMGSAFKNKGVQKLLDGVLDYLASPVDVKNKALDQNNNEEMIVLESNYEKPLVCLAFKLEDGRYGQLTYVRVYQGKLSKGMTIYNMSNNKKHNVGRLCRMHSDEMEDIDSAEAGDIIALFGIDCASGDTFTDGKLKVSMESMFVPAPVISLTIEAKESKHLNNLAKALNRFTKEDPTFQTHVDPESGQTIIKGMGELHLEVYIERMKREYGVELITGAPQVAYRETITSKADFDYTHKKQTGGQGQFGRVAGYMEPIPLEETLDYDFVNKVVGGAIPREYIQSVDKGFKSCLERGSLIGFPIIGVRCVINDGAYHDVDSSDMAFQIAGRYAFRQGFNKANPQILEPIMKVEVDGPSEFQGAILGSLNQRRGMILNTTEEDAYCKTEAEVPLADMFGYSTVLRSSTQGKAEFSMEFSRYAPVPRNVAEELMKKYKVNNKDED.

One can recognise a tr-type G domain in the interval 15–291 (LKTRNIGISA…GVLDYLASPV (277 aa)). GTP-binding positions include 24-31 (AHIDSGKT), 91-95 (DTPGH), and 145-148 (NKLD).

It belongs to the TRAFAC class translation factor GTPase superfamily. Classic translation factor GTPase family. EF-G/EF-2 subfamily.

The protein localises to the cytoplasm. Functionally, catalyzes the GTP-dependent ribosomal translocation step during translation elongation. During this step, the ribosome changes from the pre-translocational (PRE) to the post-translocational (POST) state as the newly formed A-site-bound peptidyl-tRNA and P-site-bound deacylated tRNA move to the P and E sites, respectively. Catalyzes the coordinated movement of the two tRNA molecules, the mRNA and conformational changes in the ribosome. The chain is Elongation factor G from Leptospira borgpetersenii serovar Hardjo-bovis (strain JB197).